Here is a 395-residue protein sequence, read N- to C-terminus: GTPase Obg (395 aa).

Residues Met1–Met159 form the Obg domain. Residues Ile128 to Gly147 are disordered. Residues Ala160 to Thr333 enclose the OBG-type G domain. Residues Gly166–Ser173, Phe191–Val195, Asp213–Gly216, Asn283–Asp286, and Ser314–Ile316 contribute to the GTP site. Residues Ser173 and Thr193 each contribute to the Mg(2+) site. A compositionally biased stretch (basic and acidic residues) spans Ala340–Met368. A disordered region spans residues Ala340–Pro395. The span at Glu376–Pro395 shows a compositional bias: acidic residues.

The protein belongs to the TRAFAC class OBG-HflX-like GTPase superfamily. OBG GTPase family. Monomer. Mg(2+) serves as cofactor.

The protein resides in the cytoplasm. In terms of biological role, an essential GTPase which binds GTP, GDP and possibly (p)ppGpp with moderate affinity, with high nucleotide exchange rates and a fairly low GTP hydrolysis rate. Plays a role in control of the cell cycle, stress response, ribosome biogenesis and in those bacteria that undergo differentiation, in morphogenesis control. The polypeptide is GTPase Obg (Chromohalobacter salexigens (strain ATCC BAA-138 / DSM 3043 / CIP 106854 / NCIMB 13768 / 1H11)).